Consider the following 184-residue polypeptide: Chromobox protein homolog hpl-1 (184 aa).

The span at 1–13 shows a compositional bias: polar residues; sequence MSRQNPVRSTRGN. Disordered stretches follow at residues 1-27 and 87-115; these read MSRQ…QDAP and AAKR…STSD. The 59-residue stretch at 37 to 95 folds into the Chromo domain; it reads FVVEKVLNKRLTRGGSEYYIKWQGFPESECSWEPIENLQCDRMIQEYEKEAAKRTTRKR. Residues 99–115 are compositionally biased toward polar residues; that stretch reads PQPSTSSSAELQPSTSD.

Interacts with histone demethylase spr-5. Interacts with chromobox protein homolog hpl-2. Interacts with histone H3 tails methylated at 'Lys-9' (H3K9me3) and 'Lys-23'(H3K23me2). Interacts with histone H1 variant his-24 (when monomethylated at 'Lys-14'); the interaction is direct. May interact with the REST corepressor rcor-1, histone deacetylase hda-1, and the histone demethylase lsd-1.

It localises to the nucleus. Functionally, seems to be involved in transcriptional silencing in heterochromatin-like complexes. Involved in epigenetic repression. Probably does not act as global transcriptional repressor. Plays a role in linking epigenetic regulation with the innate immune response. Acting in concert with chromobox protein homolog hpl-2 and histone H1 protein his-24, involved in reproduction, somatic gonad development, male tail development and vulval cell fate decisions; perhaps as a result of modulating expression of Hox genes mab-5 and egl-5. Role in growth and somatic gonad development is antagonized by histone-lysine N-methyltransferase set-2/SET1. Required for larval development, acting redundantly with hpl-2. Plays a role in the formation of the vulva and in fertility, acting together with a CoREST-like complex, and hpl-2. In Caenorhabditis elegans, this protein is Chromobox protein homolog hpl-1.